The following is a 253-amino-acid chain: Sulfate transporter CysZ (253 aa).

Helical transmembrane passes span 31-51, 75-95, 151-171, and 222-242; these read FVILPLLVNILLMGGAFWWLF, LLWPLAVISVLLVFGYFFSTI, IVLLILYFIPGIGQTVAPVLW, and IPLLNLFIMPVAVCGATAMWV.

The protein belongs to the CysZ family.

The protein localises to the cell inner membrane. Functionally, high affinity, high specificity proton-dependent sulfate transporter, which mediates sulfate uptake. Provides the sulfur source for the cysteine synthesis pathway. The protein is Sulfate transporter CysZ of Shigella dysenteriae serotype 1 (strain Sd197).